We begin with the raw amino-acid sequence, 293 residues long: Large ribosomal subunit protein uL2c (293 aa).

Positions 224-245 are disordered; that stretch reads VMNPVDHPHGGGEGKSPIGRAR.

It belongs to the universal ribosomal protein uL2 family. As to quaternary structure, part of the 50S ribosomal subunit.

It localises to the plastid. The protein resides in the chloroplast. The chain is Large ribosomal subunit protein uL2c (rpl2) from Pyropia yezoensis (Susabi-nori).